A 124-amino-acid chain; its full sequence is Small ribosomal subunit protein uS12 (124 aa).

3-methylthioaspartic acid is present on Asp-89.

It belongs to the universal ribosomal protein uS12 family. As to quaternary structure, part of the 30S ribosomal subunit. Contacts proteins S8 and S17. May interact with IF1 in the 30S initiation complex.

With S4 and S5 plays an important role in translational accuracy. Functionally, interacts with and stabilizes bases of the 16S rRNA that are involved in tRNA selection in the A site and with the mRNA backbone. Located at the interface of the 30S and 50S subunits, it traverses the body of the 30S subunit contacting proteins on the other side and probably holding the rRNA structure together. The combined cluster of proteins S8, S12 and S17 appears to hold together the shoulder and platform of the 30S subunit. The polypeptide is Small ribosomal subunit protein uS12 (Erwinia amylovora (Fire blight bacteria)).